The sequence spans 77 residues: Translation initiation factor IF-1, chloroplastic (77 aa).

Residues 1–72 (MNKQGLFQME…TKGRIVYRQR (72 aa)) form the S1-like domain.

The protein belongs to the IF-1 family. In terms of assembly, component of the 30S ribosomal translation pre-initiation complex which assembles on the 30S ribosome in the order IF-2 and IF-3, IF-1 and N-formylmethionyl-tRNA(fMet); mRNA recruitment can occur at any time during PIC assembly.

Its subcellular location is the plastid. It localises to the chloroplast. In terms of biological role, one of the essential components for the initiation of protein synthesis. Stabilizes the binding of IF-2 and IF-3 on the 30S subunit to which N-formylmethionyl-tRNA(fMet) subsequently binds. Helps modulate mRNA selection, yielding the 30S pre-initiation complex (PIC). Upon addition of the 50S ribosomal subunit IF-1, IF-2 and IF-3 are released leaving the mature 70S translation initiation complex. This Nephroselmis olivacea (Green alga) protein is Translation initiation factor IF-1, chloroplastic.